The following is a 411-amino-acid chain: MAAEAGGGEPLVKFVKLSGRAAGSKKKVRWFPVRRLFTHSCPSLRIPSRFLREGRRSPPARSGHRCVADNTNLYVFGGYNPDYDESGGPENEDYPLFRELWRYHFATGMWHQMGTDGHMPRELASMSLVLHGHNLLVFGGTGIPFGESNGNDVYVCNVRYKRWSKLNCRGKKPNRIYGQAMAIIHGFLYVFGGTTGYIYSTDLHRLDLSTREWIQLRPNNPPCDLPEERYRHEIAHDGQRIYVLGGGTSWTAYSLEKIHAYNFETNTWEDIPTKPHGNLGFPAARRCHSCVQIKNEVFICGGYNGLVILGDLWKLNLQTFQWTKLPALMPEPAYFHCAAVTPAGCMYIHGGVVNIQQNKRTGSLFKIWLTVPSLLELCWENLLKYFPQLCQLPTHQLLQLGLSQELIERLK.

Kelch repeat units follow at residues 72-133, 135-186, 187-239, 240-288, 296-342, and 345-388; these read NLYV…LHGH, LLVF…IIHG, FLYV…HDGQ, RIYV…RRCH, EVFI…AVTP, and CMYI…YFPQ.

This sequence belongs to the KLHDC10 family. As to quaternary structure, component of a CRL2 E3 ubiquitin-protein ligase complex, also named ECS (Elongin BC-CUL2/5-SOCS-box protein) complex, composed of CUL2, Elongin BC (ELOB and ELOC), RBX1 and substrate-specific adapter KLHDC10.

It participates in protein modification; protein ubiquitination. Substrate-recognition component of a Cul2-RING (CRL2) E3 ubiquitin-protein ligase complex of the DesCEND (destruction via C-end degrons) pathway, which recognizes a C-degron located at the extreme C terminus of target proteins, leading to their ubiquitination and degradation. The C-degron recognized by the DesCEND pathway is usually a motif of less than ten residues and can be present in full-length proteins, truncated proteins or proteolytically cleaved forms. The CRL2(KLHDC10) complex specifically recognizes proteins with a proline-glycine (Pro-Gly) or an alanine tail (CAT tail) at the C-terminus, leading to their ubiquitination and degradation. The CRL2(KLHDC10) complex is involved in the ribosome-associated quality control (RQC) pathway, which mediates the extraction of incompletely synthesized nascent chains from stalled ribosomes: CRL2(KLHDC10) acts downstream of NEMF and recognizes CAT tails associated with stalled nascent chains, leading to their ubiquitination and degradation. The chain is Kelch domain-containing protein 10 from Xenopus laevis (African clawed frog).